Consider the following 210-residue polypeptide: Somatotropin (210 aa).

A signal peptide spans Met-1–Ala-22. His-38 lines the Zn(2+) pocket. A disulfide bond links Cys-71 and Cys-183. Glu-192 serves as a coordination point for Zn(2+). Residues Cys-200 and Cys-208 are joined by a disulfide bond.

It belongs to the somatotropin/prolactin family.

The protein resides in the secreted. Functionally, growth hormone plays an important role in growth control and is involved in the regulation of several anabolic processes. Implicated as an osmoregulatory substance important for seawater adaptation. This chain is Somatotropin (gh), found in Salmo salar (Atlantic salmon).